The following is a 580-amino-acid chain: Protein O-linked-mannose beta-1,4-N-acetylglucosaminyltransferase 2 (580 aa).

Topologically, residues 1–4 (MHLS) are cytoplasmic. A helical; Signal-anchor for type II membrane protein membrane pass occupies residues 5–25 (AVLNALLVSVLAAVLWKHVRL). Residues 26-580 (REHAAALEEE…PFADVLVCNT (555 aa)) are Lumenal-facing. N-linked (GlcNAc...) asparagine glycans are attached at residues Asn99 and Asn276. The Fibronectin type-III domain maps to 488–580 (ARCQASVQGA…PFADVLVCNT (93 aa)).

Belongs to the glycosyltransferase 61 family.

The protein resides in the endoplasmic reticulum membrane. It carries out the reaction 3-O-(alpha-D-mannosyl)-L-threonyl-[protein] + UDP-N-acetyl-alpha-D-glucosamine = 3-O-(N-acetyl-beta-D-glucosaminyl-(1-&gt;4)-alpha-D-mannosyl)-L-threonyl-[protein] + UDP + H(+). Its pathway is protein modification; protein glycosylation. Its function is as follows. O-linked mannose beta-1,4-N-acetylglucosaminyltransferase that transfers UDP-N-acetyl-D-glucosamine to the 4-position of the mannose to generate N-acetyl-D-glucosamine-beta-1,4-O-D-mannosylprotein. Involved in the biosynthesis of the phosphorylated O-mannosyl trisaccharide (N-acetylgalactosamine-beta-3-N-acetylglucosamine-beta-4-(phosphate-6-)mannose), a carbohydrate structure present in alpha-dystroglycan (DAG1), which is required for binding laminin G-like domain-containing extracellular proteins with high affinity. The chain is Protein O-linked-mannose beta-1,4-N-acetylglucosaminyltransferase 2 (POMGNT2) from Canis lupus familiaris (Dog).